The chain runs to 570 residues: MSIVGLVSVVCPSGGIKKRYFSKGLDNFQGFRSSECLGIQLQVPVPFYSGIRQSPRATSLQVVCKDCPRPELEGAVNFLEAAQLSASFRSSPRPEKGLEVVVVGAGLAGLSTAKYLADAGHKPILLESRDVLGGKIAAWKDKDGDWYETGLHIFFGAYPNVQNLFGELGINDRLQWKEHSMIFAMPNKPGEFSRFDFPEVLPAPLNGIWAILRNNEMLTWPEKVRFAIGLLPAMVGGQAYVEAQDGLTVTEWMRRQGVPDRVNDEVFIAMSKALNFINPDELSMQCILIALNRFLQEKHGSKMAFLDGNPPERLCMPIVDHIQSLGGRAQLNSRLQKIELNPDGTVKHFVLGNGNIITGDAYVVAAPVDILKLLLPQEWREIPYFQKLDKLVGVPVINVHIWFDRKLKNTYDHLLFTRSPLLSVYADMSVTCKEYYDPNRSMLELVFAPAEEWISRSDSEIIERTMKELAKLFPDEIAADQSKAKILKYHVVKTPRSVYKTIPDCEPCRPLQRSPIEGFYLAGDYTNQKYLASMEGAVLSGKLCAQSIVQDYELLVRRSKKASTAEMTVV.

The N-terminal 91 residues, 1–91, are a transit peptide targeting the chloroplast and chromoplast; that stretch reads MSIVGLVSVV…AQLSASFRSS (91 aa). FAD is bound by residues 104 to 120, Ala-108, 127 to 128, Lys-135, 152 to 153, and Tyr-158; these read GAGL…ADAG, ES, and HI. Residue Arg-293 participates in substrate binding. Asp-524 serves as a coordination point for FAD. Residue Ala-532 coordinates substrate. Met-534 is a binding site for FAD.

Belongs to the carotenoid/retinoid oxidoreductase family. Homotetramer. Requires FAD as cofactor. In terms of tissue distribution, expressed more strongly in flowers than in leaves.

The protein localises to the plastid. It is found in the chloroplast. It localises to the chromoplast. The protein resides in the membrane. It carries out the reaction 2 a plastoquinone + 15-cis-phytoene = 9,9',15-tri-cis-zeta-carotene + 2 a plastoquinol. Its pathway is carotenoid biosynthesis; lycopene biosynthesis. Its function is as follows. Converts phytoene into zeta-carotene via the intermediary of phytofluene by the symmetrical introduction of two double bonds at the C-11 and C-11' positions of phytoene with a concomitant isomerization of two neighboring double bonds at the C9 and C9' positions from trans to cis. This is 15-cis-phytoene desaturase, chloroplastic/chromoplastic (PDS1) from Narcissus pseudonarcissus (Daffodil).